Reading from the N-terminus, the 926-residue chain is Probable Xaa-Pro aminopeptidase PTT_10145 (926 aa).

Residues Asp-274, Asp-285, Glu-435, and Glu-476 each coordinate Mn(2+). Disordered regions lie at residues 505-538, 595-615, 668-696, 711-741, and 865-926; these read GNPG…PGIS, KRDS…LSPV, SSST…EEKH, IGQS…KAAT, and MPVL…FLTR. Positions 506–515 are enriched in polar residues; that stretch reads NPGTTEILNP. 2 stretches are compositionally biased toward basic and acidic residues: residues 685–696 and 719–730; these read SRQKSHTVEEKH and GPEERRRKAQSD. Residues 887-897 are compositionally biased toward polar residues; it reads NNATNKRSMID. Over residues 900-915 the composition is skewed to basic and acidic residues; sequence PAERRTRPERPERPAR.

The protein belongs to the peptidase M24B family. Requires Mn(2+) as cofactor.

The catalysed reaction is Release of any N-terminal amino acid, including proline, that is linked to proline, even from a dipeptide or tripeptide.. Functionally, catalyzes the removal of a penultimate prolyl residue from the N-termini of peptides. The polypeptide is Probable Xaa-Pro aminopeptidase PTT_10145 (Pyrenophora teres f. teres (strain 0-1) (Barley net blotch fungus)).